The sequence spans 457 residues: Protein PIN-LIKES 2 (457 aa).

Over 1 to 15 the chain is Lumenal; it reads MSGFSSGNVNSRVVD. Residues 16 to 36 traverse the membrane as a helical segment; it reads ILSGVVPLLKLICLTVIGLLL. Residues 37–54 are Cytoplasmic-facing; that stretch reads AHPKTQLVPRATFRLLSK. A helical membrane pass occupies residues 55-75; the sequence is LVFALFLPCLIFTELGESITL. The Lumenal segment spans residues 76–85; it reads DNIVQWWFIP. The chain crosses the membrane as a helical span at residues 86–106; it reads VNVLLSAVVGSLIGYLVVLIC. Residues 107 to 116 lie on the Cytoplasmic side of the membrane; it reads RPPPEFNRFT. The helical transmembrane segment at 117–137 threads the bilayer; sequence IVMTAFGNTGNLLLAIVSSVC. The Lumenal portion of the chain corresponds to 138–151; that stretch reads HTKTNPFGPNCNSR. The chain crosses the membrane as a helical span at residues 152 to 172; that stretch reads GVSYVSFAQWVAVILVYTVVY. The Cytoplasmic segment spans residues 173–291; it reads HMMEPPLEYY…PVKHILQPPT (119 aa). The helical transmembrane segment at 292 to 312 threads the bilayer; that stretch reads IASLLAIIIGSVPQLKSVVFG. The Lumenal segment spans residues 313–322; sequence YDAPLSFITD. A helical membrane pass occupies residues 323-343; the sequence is SLNIMGSAMVPSVMLVLGGML. Residues 344–356 are Cytoplasmic-facing; the sequence is SEGPNESTLGLRT. A helical membrane pass occupies residues 357-377; the sequence is TIGISVARLLVLPLVGIGIVM. The Lumenal segment spans residues 378 to 393; sequence SADKLGLISSADPMFK. The helical transmembrane segment at 394–414 threads the bilayer; that stretch reads FVLLLQYSTPSAILLGAIASL. At 415–424 the chain is on the cytoplasmic side; that stretch reads RGYAVREASA. A helical membrane pass occupies residues 425-445; it reads LLFWQHIFALLSLTFYIVIFF. At 446 to 457 the chain is on the lumenal side; the sequence is KLTVETTVQGMQ.

It belongs to the auxin efflux carrier (TC 2.A.69.2) family. As to expression, expressed in seedlings, rosette and cauline leaves, flowers and siliques.

The protein localises to the endoplasmic reticulum membrane. Functionally, involved in cellular auxin homeostasis by regulating auxin metabolism. Regulates intracellular auxin accumulation at the endoplasmic reticulum and thus auxin availability for nuclear auxin signaling. This Arabidopsis thaliana (Mouse-ear cress) protein is Protein PIN-LIKES 2.